The sequence spans 105 residues: Thioredoxin (105 aa).

One can recognise a Thioredoxin domain in the interval 2–105 (VKLIESKEAF…KLEATITEFA (104 aa)). Residue lysine 3 is modified to N6-acetyllysine. At lysine 8 the chain carries N6-succinyllysine. Catalysis depends on nucleophile residues cysteine 32 and cysteine 35. A disulfide bridge links cysteine 32 with cysteine 35. N6-acetyllysine is present on lysine 39. Residues cysteine 62 and cysteine 69 each carry the S-nitrosocysteine modification. At cysteine 73 the chain carries S-nitrosocysteine; alternate. Lysine 94 carries the post-translational modification N6-acetyllysine; alternate. At lysine 94 the chain carries N6-succinyllysine; alternate.

This sequence belongs to the thioredoxin family. In terms of assembly, homodimer; disulfide-linked. Interacts with TXNIP through the redox-active site. Interacts with MAP3K5 and CASP3. Interacts with APEX1; the interaction stimulates the FOS/JUN AP-1 DNA-binding activity in a redox-dependent manner. In the fully reduced protein, both Cys-69 and Cys-73 are nitrosylated in response to nitric oxide (NO). When two disulfide bonds are present in the protein, only Cys-73 is nitrosylated. Cys-73 can serve as donor for nitrosylation of target proteins.

The protein localises to the nucleus. It is found in the cytoplasm. It localises to the secreted. Its function is as follows. Participates in various redox reactions through the reversible oxidation of its active center dithiol to a disulfide and catalyzes dithiol-disulfide exchange reactions. Plays a role in the reversible S-nitrosylation of cysteine residues in target proteins, and thereby contributes to the response to intracellular nitric oxide. Nitrosylates the active site Cys of CASP3 in response to nitric oxide (NO), and thereby inhibits caspase-3 activity. Induces the FOS/JUN AP-1 DNA binding activity in ionizing radiation (IR) cells through its oxidation/reduction status and stimulates AP-1 transcriptional activity. This Rattus norvegicus (Rat) protein is Thioredoxin (Txn).